The chain runs to 413 residues: Multifunctional CCA protein (413 aa).

ATP contacts are provided by glycine 8 and arginine 11. The CTP site is built by glycine 8 and arginine 11. Mg(2+)-binding residues include aspartate 21 and aspartate 23. The ATP site is built by arginine 91, arginine 137, and arginine 140. Residues arginine 91, arginine 137, and arginine 140 each coordinate CTP. The 102-residue stretch at 228 to 329 (TGVHTLMTLS…VKLFDAIDAW (102 aa)) folds into the HD domain.

This sequence belongs to the tRNA nucleotidyltransferase/poly(A) polymerase family. Bacterial CCA-adding enzyme type 1 subfamily. As to quaternary structure, monomer. Can also form homodimers and oligomers. Mg(2+) serves as cofactor. Requires Ni(2+) as cofactor.

It catalyses the reaction a tRNA precursor + 2 CTP + ATP = a tRNA with a 3' CCA end + 3 diphosphate. The catalysed reaction is a tRNA with a 3' CCA end + 2 CTP + ATP = a tRNA with a 3' CCACCA end + 3 diphosphate. Its function is as follows. Catalyzes the addition and repair of the essential 3'-terminal CCA sequence in tRNAs without using a nucleic acid template. Adds these three nucleotides in the order of C, C, and A to the tRNA nucleotide-73, using CTP and ATP as substrates and producing inorganic pyrophosphate. tRNA 3'-terminal CCA addition is required both for tRNA processing and repair. Also involved in tRNA surveillance by mediating tandem CCA addition to generate a CCACCA at the 3' terminus of unstable tRNAs. While stable tRNAs receive only 3'-terminal CCA, unstable tRNAs are marked with CCACCA and rapidly degraded. This is Multifunctional CCA protein from Salmonella schwarzengrund (strain CVM19633).